A 600-amino-acid polypeptide reads, in one-letter code: MEPRAGCRLPVRVEQVVNGALVVTVSCGERSFAGILLDCTKKSGLFGLSPSTLLPLADNSSAVSCHGQAPEEGTGEVMQLETGPLHPHHKDPEKDQPPKTAVSEPPPPLIPPVPAGNLPPFPPYFEGAPFPHPLWLRNTYQQWVPQPPPRTIKRTRRRLSRNRDPGRLILSTIRLRPRQVLCEKCKSTVSPQEASPSPLNTPKPRRRLGSGPDSEHRKPEEPEDSAVIATAAPRRSKREKREEDRVAGERVPRSPVIKISYSTPQGKGEVVKIPSRVHGSVEPFCPQQSLQNGSQDSEVSRDVEPRGGGDRPPSGSSASIPKLKLTRPVPPISDLPPPKIRLKPHRLGDGEHEPLYRAELVEELNGCPRGPLVSSPALFADGSSHGLEDLSSGSSGEDDDLKRFPQGKHGRDGLAFLVDCPGRRTDCTSESVCSTDSLDELKSSGSEVTSPDTGDLSSGDSASVPSSSADTRQTVPPLTVRLHTQSVSRCVTEDGRTVAVGDIVWGKIHGFPWWPARVLDISLGQKEDGEPSWQEAKVSWFGSPTTSFLSISKLSPFSEFFKLRFNRKKKGMYRKAITEAANATQHVAPEIRELLTQFEM.

5 disordered regions span residues 81–115 (ETGPLHPHHKDPEKDQPPKTAVSEPPPPLIPPVPA), 143–171 (WVPQPPPRTIKRTRRRLSRNRDPGRLILS), 186–350 (KSTV…LGDG), 366–408 (GCPR…PQGK), and 426–477 (DCTS…TVPP). Positions 104–115 (EPPPPLIPPVPA) are enriched in pro residues. The segment covering 151–160 (TIKRTRRRLS) has biased composition (basic residues). Over residues 187-200 (STVSPQEASPSPLN) the composition is skewed to polar residues. Phosphoserine occurs at positions 190 and 210. The span at 239–252 (EKREEDRVAGERVP) shows a compositional bias: basic and acidic residues. Position 254 is a phosphoserine (Ser254). Positions 286-297 (PQQSLQNGSQDS) are enriched in polar residues. The span at 298 to 309 (EVSRDVEPRGGG) shows a compositional bias: basic and acidic residues. Pro residues predominate over residues 328–339 (PVPPISDLPPPK). Low complexity predominate over residues 381–395 (DGSSHGLEDLSSGSS). Polar residues predominate over residues 443–456 (SSGSEVTSPDTGDL). Ser457 is subject to Phosphoserine. Residues 457–468 (SSGDSASVPSSS) are compositionally biased toward low complexity. The PWWP domain occupies 500–560 (VGDIVWGKIH…ISKLSPFSEF (61 aa)).

As to quaternary structure, component of a MTA1-specific subcomplex of the NuRD complex composed of PWWP2B, MTA1 and HDAC1 but does not contain CHD4 and MBD3. Interacts with MTA1, MTA2, MTA3, HDAC1, HDAC2, RBBP4, RBBP7, BRCC3 and ZNF516. Does not interact with CHD4 and MBD3. In terms of processing, deubiquitinated by BRCC3; leading to its stabilization. In terms of tissue distribution, expressed in the brown adipose tissue.

It is found in the nucleus. Chromatin-binding protein that acts as an adapter between distinct nucleosome components (H3K36me3 or H2A.Z) and chromatin-modifying complexes, contributing to the regulation of the levels of histone acetylation at actively transcribed genes. Competes with CHD4 and MBD3 for interaction with MTA1 to form a NuRD subcomplex, preventing the formation of full NuRD complex (containing CHD4 and MBD3), leading to recruitment of HDACs to gene promoters resulting in turn in the deacetylation of nearby H3K27 and H2A.Z. Plays a role in facilitating transcriptional elongation through regulation of histone acetylation. Negatively regulates brown adipocyte thermogenesis by interacting with and stabilizing HDAC1 at the UCP1 gene promoter, thereby promoting histone deacetylation at the promoter leading to the repression of UCP1 expression. The sequence is that of PWWP domain-containing protein 2B (Pwwp2b) from Mus musculus (Mouse).